The following is a 120-amino-acid chain: Large ribosomal subunit protein uL18 (120 aa).

This sequence belongs to the universal ribosomal protein uL18 family. In terms of assembly, part of the 50S ribosomal subunit; part of the 5S rRNA/L5/L18/L25 subcomplex. Contacts the 5S and 23S rRNAs.

This is one of the proteins that bind and probably mediate the attachment of the 5S RNA into the large ribosomal subunit, where it forms part of the central protuberance. This Rhodopseudomonas palustris (strain BisB18) protein is Large ribosomal subunit protein uL18.